Reading from the N-terminus, the 226-residue chain is Leucyl/phenylalanyl-tRNA--protein transferase (226 aa).

The protein belongs to the L/F-transferase family.

It is found in the cytoplasm. It catalyses the reaction N-terminal L-lysyl-[protein] + L-leucyl-tRNA(Leu) = N-terminal L-leucyl-L-lysyl-[protein] + tRNA(Leu) + H(+). The catalysed reaction is N-terminal L-arginyl-[protein] + L-leucyl-tRNA(Leu) = N-terminal L-leucyl-L-arginyl-[protein] + tRNA(Leu) + H(+). The enzyme catalyses L-phenylalanyl-tRNA(Phe) + an N-terminal L-alpha-aminoacyl-[protein] = an N-terminal L-phenylalanyl-L-alpha-aminoacyl-[protein] + tRNA(Phe). Functions in the N-end rule pathway of protein degradation where it conjugates Leu, Phe and, less efficiently, Met from aminoacyl-tRNAs to the N-termini of proteins containing an N-terminal arginine or lysine. This is Leucyl/phenylalanyl-tRNA--protein transferase from Salinibacter ruber (strain DSM 13855 / M31).